The following is a 136-amino-acid chain: Small ribosomal subunit protein uS9 (136 aa).

It belongs to the universal ribosomal protein uS9 family.

The sequence is that of Small ribosomal subunit protein uS9 from Borrelia duttonii (strain Ly).